The following is a 318-amino-acid chain: Pantothenate kinase (318 aa).

96–103 is an ATP binding site; it reads GSVAVGKS.

This sequence belongs to the prokaryotic pantothenate kinase family.

It localises to the cytoplasm. It catalyses the reaction (R)-pantothenate + ATP = (R)-4'-phosphopantothenate + ADP + H(+). The protein operates within cofactor biosynthesis; coenzyme A biosynthesis; CoA from (R)-pantothenate: step 1/5. This chain is Pantothenate kinase, found in Rhodopseudomonas palustris (strain HaA2).